We begin with the raw amino-acid sequence, 448 residues long: JmjC domain-containing protein D (448 aa).

A JmjC domain is found at 305-448; the sequence is EQIPQLRNDI…SLSQSFSIFP (144 aa).

The protein is JmjC domain-containing protein D (jcdD) of Dictyostelium discoideum (Social amoeba).